The following is a 1078-amino-acid chain: MAANSSFFLADNCAPHNQSFIQFCIHAASKKKGRIALMCLANLFLLFSFHLLYARFCSGFPYVVPSTARSTNQIFHTNLEQLVNSPENKQIFSQLKFSDQAFYDPHDNVVGTTEFPVFNQYQRQPYVANGYIGSRIPNLGQGFTYDQLTNSSTANDDDLLNGWPLFNKRYSGAFVAGFYDLQKNTTGTNFAELLENGYESVIAAVPQWTALSLSVEILGKKYTLDPSLEHEAIGDITNYVQNMSLSDGIVTTQFTWLNTFDVKYEILAHRENINLGLVNMQVYNPGNESVQVIVSDVLDFNSSQRCQLNQISHDKNGIYVTFHPQGLSYIDGAIYSTLSANGQITREQTNETVFQNVELTIEPHSCVQVAKYVGIATTDLDPDSFKTADDVLKFARKVSQNKKHGDATQLVNSHRSAWSKIIQDAPLVTFPSDSLLNLGARASIFHLLANTRPNAEGVTGALGVSGLSSDSYGGMVFWDTDLWMLNGILPFAPDHIKSFINYRVHLHQQAIDNVPRGYQGAVYPWTSGRFGNCTGTGPCLDYEYHINMAVAMASWQLYISGAADDTFLESVAYPIINDAASFLAEYVVHYNDTLGKYTTKNLTDPDEFANHVDNGAYTNTGIVLVMRWAQIAGSILGKQVPKIYHDIETAMFLPTAENTQNITLEYSGMNSSVGIKQADVIMMTYPLENELIDQDQAYINMEFYSMKQVGYGPAMTFPIFSIVASNLAFTGCASQSYLHKAIQPFLRGPFAQFAEQNNDDYLTNGGTHPAFPFLTAHGGFLQAILQGLTGMRFDYTFENNKLQRLLKLDPIALPCLGEGVRFDSIKYDNHTLSMAINETHFTIKNKGKTTPNARNYVTILLAERNAMHGKYTINDEDEQSFPLFETSESFPDSISECNKAGFFNITEGAYGDVSISINDGDNTTSWQAKYNDTTGKVLVDLKSFRNISSGTFIWGDKPPKRVKVSKYSGSSFTAVTDFFAQVDFGNELFNEYKYANPEGKLHNQSDVFEEVYSGDVKISAPFDPEEYFQVWVPTRHNITEVAVNLQTRFLLIEVDEIHNTEAIDGDYGGAKLAEVVFY.

Positions M1 to A54 are cleaved as a signal peptide. 8 N-linked (GlcNAc...) asparagine glycosylation sites follow: N4, N17, N150, N184, N242, N287, N301, and N350. W478–D479 provides a ligand contact to substrate. Residues N532, N591, and N601 are each glycosylated (N-linked (GlcNAc...) asparagine). Residue E607 is the Proton donor of the active site. Residues N661 and N670 are each glycosylated (N-linked (GlcNAc...) asparagine). A substrate-binding site is contributed by K676 to Q677. N-linked (GlcNAc...) asparagine glycosylation is found at N829, N837, N904, N922, N931, N946, N1003, and N1037.

This sequence belongs to the glycosyl hydrolase 65 family.

Its subcellular location is the secreted. It is found in the cell wall. It catalyses the reaction alpha,alpha-trehalose + H2O = alpha-D-glucose + beta-D-glucose. Cell wall acid trehalase that catalyzes hydrolysis of the disaccharide trehalose and required for growth on trehalose as carbon source. Plays a role in dimorphic conversion and virulence. The chain is Cell wall acid trehalase ATC1 (ATC1) from Candida albicans (strain SC5314 / ATCC MYA-2876) (Yeast).